The following is a 435-amino-acid chain: Acetyltransferase atnC (435 aa).

The next 3 helical transmembrane spans lie at 10 to 30 (AFANVALLFAVQILIPAFLII), 40 to 60 (YFGIPCIAFPAYLIFQLAPTL), and 68 to 88 (SFLACEGILVVAHCVNLLLIL). A glycan (N-linked (GlcNAc...) asparagine) is linked at Asn-203. The next 3 membrane-spanning stretches (helical) occupy residues 306–326 (FLVFLLSGILHAVSANIMGLS), 333–353 (IPYFSSFALGMMLEDGVQAFY), and 370–390 (VVGFIWVVFWMSLTSPWYMFP). The N-linked (GlcNAc...) asparagine glycan is linked to Asn-406. A helical transmembrane segment spans residues 407–427 (LTEVIGMPMMWGLLGTFGMLV).

It belongs to the wax synthase family.

It is found in the membrane. It participates in secondary metabolite biosynthesis; terpenoid biosynthesis. Functionally, acetyltransferase; part of the gene cluster that mediates the biosynthesis of the meroterpenoids arthripenoids. The pathway begins with the HR-PKS atnH that catalyzes two chain-extension steps to form a reduced triketide, which then primes the SAT domain in the NR-PKS atnG to initiate three more cycles of extension to give a linear hexaketide corresponding to the polyketide part of arthripenoids. The FAD-dependent monooxygenase atnJ then performs an oxidative decarboxylation at C11 of the atnH/atnG product, via an electrophilic aromatic hydroxylation with concomitant ipso-decarboxylation. The membrane-bound polyprenyl transferase atnF then introduces a farnesyl group before the FAD-dependent monooxygenase atnK functions as the first epoxidase on terminal C12'-C13' olefin, followed by a second epoxidation on C7'-C8' catalyzed by atnA. The terpene cyclase/mutase atnI then initiates the sequential tricyclic ring formation through protonation of the terminal epoxide and catalyzes the regioselective and stereoselective 6/6/6-tricyclic ring formation. The cytochrome P450 monooxygenase atnM is responsible for hydroxylating both C1' and C10'. The next steps may involve ketoreduction and acetyl transfer by the ketoreductase atnB and the acetyltransferase atnC, and lead to the production of arthripenoid B, the final biosynthetic product of the atn cluster. The hydroquinone moiety in arthripenoid B is prone to undergo spontaneous oxidation to afford a benzoquinone compound, a key intermediate for generating structure diversity. For instance, addition of a cysteine followed by ring contraction gives arthripenoid A, tautomerization gives the main product arthripenoid C, addition of a molecular of water or amine affords arthripenoid D or E, respectively, and loss of one water forms arthripenoid F. In Arthrinium sp, this protein is Acetyltransferase atnC.